An 801-amino-acid chain; its full sequence is Zinc finger Y-chromosomal protein (801 aa).

Ser-270 carries the phosphoserine modification. The C2H2-type 1 zinc finger occupies 421–443 (YPCMICGKKFKSRGFLKRHMKNH). The segment at 452-474 (YHCTDCDYTTNKKISLHNHLESH) adopts a C2H2-type 2; atypical zinc-finger fold. C2H2-type zinc fingers lie at residues 484–506 (IECD…KMVH), 515–538 (HKCK…LAVH), 544–566 (HICV…MRIH), 572–595 (YQCQ…KTKH), 601–623 (FKCD…TLVH), 629–652 (HQCL…ISVH), 658–680 (HKCE…VAVH), 686–709 (HQCR…LSVH), 715–737 (FRCK…MKTH), 743–766 (YQCE…ISIH), and 772–795 (HRCE…MRHH).

This sequence belongs to the krueppel C2H2-type zinc-finger protein family. ZFX/ZFY subfamily.

It is found in the nucleus. Functionally, probable transcriptional activator. Binds to the consensus sequence 5'-AGGCCY-3'. This is Zinc finger Y-chromosomal protein (ZFY) from Homo sapiens (Human).